Reading from the N-terminus, the 126-residue chain is Muscarinic acetylcholine receptor M4 (126 aa).

Positions 1–90 (MKQSVKKPPP…LQPRTLNPAS (90 aa)) are disordered. Residues 1–126 (MKQSVKKPPP…PAGMRPAANV (126 aa)) are Cytoplasmic-facing. Pro residues predominate over residues 28–39 (APPPVLPPPPRP). Over residues 47-57 (NESSSGSATQN) the composition is skewed to polar residues. Low complexity predominate over residues 64–75 (TELSTTEATTPA).

Belongs to the G-protein coupled receptor 1 family. Muscarinic acetylcholine receptor subfamily. CHRM4 sub-subfamily.

The protein localises to the cell membrane. It is found in the postsynaptic cell membrane. Functionally, the muscarinic acetylcholine receptor mediates various cellular responses, including inhibition of adenylate cyclase, breakdown of phosphoinositides and modulation of potassium channels through the action of G proteins. Primary transducing effect is inhibition of adenylate cyclase. May couple to multiple functional responses in cell lines. The sequence is that of Muscarinic acetylcholine receptor M4 (CHRM4) from Bos taurus (Bovine).